Here is a 451-residue protein sequence, read N- to C-terminus: MKTKLNIYNMQFLLFVFLVWDPARLVLANIQEDEAKNNITIFTRILDRLLDGYDNRLRPGLGDSITEVFTNIYVTSFGPVSDTDMEYTIDVFFRQKWKDERLKFKGPMNILRLNNLMASKIWTPDTFFHNGKKSVAHNMTMPNKLLRIQDDGTLLYTMRLTVQAECPMHLEDFPMDAHSCPLKFGSYAYTTSEVTYIWTYNASDSVQVAPDGSRLNQYDLLGQSIGKETIKSSTGEYTVMTAHFHLKRKIGYFVIQTYLPCIMTVILSQVSFWLNRESVPARTVFGVTTVLTMTTLSISARNSLPKVAYATAMDWFIAVCYAFVFSALIEFATVNYFTKRGWAWDGKSVVNDKKKEKASVMIQNNAYAVAVANYAPNLSKDPVLSTISKSATTPEPNKKPENKPAEAKKTFNSVSKIDRMSRIVFPVLFGTFNLVYWATYLNREPVLGVSP.

Residues 1-28 form the signal peptide; the sequence is MKTKLNIYNMQFLLFVFLVWDPARLVLA. Residues 29–249 lie on the Extracellular side of the membrane; that stretch reads NIQEDEAKNN…MTAHFHLKRK (221 aa). Residue Asn38 is glycosylated (N-linked (GlcNAc...) asparagine). Residue Arg94 participates in 4-aminobutanoate binding. N-linked (GlcNAc...) asparagine glycosylation occurs at Asn138. Residue Thr157 coordinates 4-aminobutanoate. An intrachain disulfide couples Cys166 to Cys180. The helical transmembrane segment at 250-270 threads the bilayer; it reads IGYFVIQTYLPCIMTVILSQV. Topologically, residues 271–280 are cytoplasmic; that stretch reads SFWLNRESVP. Residues 281-300 form a helical membrane-spanning segment; that stretch reads ARTVFGVTTVLTMTTLSISA. Topologically, residues 301–311 are extracellular; the sequence is RNSLPKVAYAT. A helical membrane pass occupies residues 312 to 332; it reads AMDWFIAVCYAFVFSALIEFA. Over 333–420 the chain is Cytoplasmic; sequence TVNYFTKRGW…FNSVSKIDRM (88 aa). The helical transmembrane segment at 421 to 441 threads the bilayer; the sequence is SRIVFPVLFGTFNLVYWATYL. Over 442 to 451 the chain is Extracellular; it reads NREPVLGVSP.

The protein belongs to the ligand-gated ion channel (TC 1.A.9) family. Gamma-aminobutyric acid receptor (TC 1.A.9.5) subfamily. GABRA2 sub-subfamily. In terms of assembly, heteropentamer, formed by a combination of alpha (GABRA1-6), beta (GABRB1-3), gamma (GABRG1-3), delta (GABRD), epsilon (GABRE), rho (GABRR1-3), pi (GABRP) and theta (GABRQ) subunits, each subunit exhibiting distinct physiological and pharmacological properties. Interacts with UBQLN1. Interacts with KIF21B. Interacts with LHFPL4. Interacts with SHISA7; interaction leads to the regulation of GABA(A) receptor trafficking, channel deactivation kinetics and pharmacology. In terms of processing, glycosylated.

It localises to the postsynaptic cell membrane. Its subcellular location is the cell membrane. The protein localises to the cytoplasmic vesicle membrane. It is found in the cell projection. The protein resides in the dendrite. It catalyses the reaction chloride(in) = chloride(out). Activated by pentobarbital. Inhibited by the antagonist bicuculline. Its function is as follows. Alpha subunit of the heteropentameric ligand-gated chloride channel gated by gamma-aminobutyric acid (GABA), a major inhibitory neurotransmitter in the brain. GABA-gated chloride channels, also named GABA(A) receptors (GABAAR), consist of five subunits arranged around a central pore and contain GABA active binding site(s) located at the alpha and beta subunit interfaces. When activated by GABA, GABAARs selectively allow the flow of chloride anions across the cell membrane down their electrochemical gradient. Chloride influx into the postsynaptic neuron following GABAAR opening decreases the neuron ability to generate a new action potential, thereby reducing nerve transmission. The alpha-2 subunit exhibits synaptogenic activity together with beta-2 and very little to no activity together with beta-3, the gamma-2 subunit being necessary but not sufficient to induce rapid synaptic contacts formation. In Homo sapiens (Human), this protein is Gamma-aminobutyric acid receptor subunit alpha-2.